A 512-amino-acid polypeptide reads, in one-letter code: Peroxisomal N(1)-acetyl-spermine/spermidine oxidase (512 aa).

Position 1 is an N-acetylmethionine (Met-1). Positions 1 to 6 are excised as a propeptide; the sequence is MQSGGR. Residues Ala-25, Glu-46, Arg-54, and 70–71 each bind FAD; that span reads HW. His-73 and Val-195 together coordinate substrate. FAD is bound at residue Val-248. Asn-321 provides a ligand contact to substrate. Residues Glu-473 and 482-483 each bind FAD; that span reads TT. Positions 510-512 match the Microbody targeting signal motif; the sequence is PRL.

The protein belongs to the flavin monoamine oxidase family. Monomer. Requires FAD as cofactor.

The protein resides in the peroxisome. Its subcellular location is the cytoplasm. It catalyses the reaction N(1)-acetylspermine + O2 + H2O = 3-acetamidopropanal + spermidine + H2O2. The enzyme catalyses N(1)-acetylspermidine + O2 + H2O = 3-acetamidopropanal + putrescine + H2O2. The catalysed reaction is N(1),N(12)-diacetylspermine + O2 + H2O = 3-acetamidopropanal + N(1)-acetylspermidine + H2O2. The protein operates within amine and polyamine metabolism; spermine metabolism. Flavoenzyme which catalyzes the oxidation of N(1)-acetylspermine to spermidine and is thus involved in the polyamine back-conversion. Can also oxidize N(1)-acetylspermidine to putrescine. Substrate specificity: N(1)-acetylspermine = N(1)-acetylspermidine &gt; N(1),N(12)-diacylspermine &gt;&gt; spermine. Does not oxidize spermidine. Plays an important role in the regulation of polyamine intracellular concentration. In Bos taurus (Bovine), this protein is Peroxisomal N(1)-acetyl-spermine/spermidine oxidase (PAOX).